The chain runs to 684 residues: DNA ligase (684 aa).

Residues 46-50 (DYVYD), 100-101 (SL), and E130 each bind NAD(+). The active-site N6-AMP-lysine intermediate is K132. 4 residues coordinate NAD(+): R153, E187, K303, and K327. Positions 421, 424, 439, and 444 each coordinate Zn(2+). In terms of domain architecture, BRCT spans 604 to 684 (DEKNYFFNKR…DFINLSNAKK (81 aa)).

It belongs to the NAD-dependent DNA ligase family. LigA subfamily. The cofactor is Mg(2+). Mn(2+) serves as cofactor.

It carries out the reaction NAD(+) + (deoxyribonucleotide)n-3'-hydroxyl + 5'-phospho-(deoxyribonucleotide)m = (deoxyribonucleotide)n+m + AMP + beta-nicotinamide D-nucleotide.. Functionally, DNA ligase that catalyzes the formation of phosphodiester linkages between 5'-phosphoryl and 3'-hydroxyl groups in double-stranded DNA using NAD as a coenzyme and as the energy source for the reaction. It is essential for DNA replication and repair of damaged DNA. The protein is DNA ligase of Oenococcus oeni (strain ATCC BAA-331 / PSU-1).